The chain runs to 331 residues: GTP 3',8-cyclase (331 aa).

Residues 1–231 (MNAVDYLRIS…DGQVQGNGPA (231 aa)) form the Radical SAM core domain. Arg-8 is a binding site for GTP. The [4Fe-4S] cluster site is built by Cys-15 and Cys-19. An S-adenosyl-L-methionine-binding site is contributed by Tyr-21. [4Fe-4S] cluster is bound at residue Cys-22. Arg-60 is a GTP binding site. Gly-64 lines the S-adenosyl-L-methionine pocket. Residue Thr-91 participates in GTP binding. Ser-115 provides a ligand contact to S-adenosyl-L-methionine. Lys-157 contributes to the GTP binding site. S-adenosyl-L-methionine is bound at residue Met-191. The [4Fe-4S] cluster site is built by Cys-254 and Cys-257. Residue 259 to 261 (RMR) coordinates GTP. Cys-271 is a [4Fe-4S] cluster binding site.

This sequence belongs to the radical SAM superfamily. MoaA family. As to quaternary structure, monomer and homodimer. [4Fe-4S] cluster is required as a cofactor.

It carries out the reaction GTP + AH2 + S-adenosyl-L-methionine = (8S)-3',8-cyclo-7,8-dihydroguanosine 5'-triphosphate + 5'-deoxyadenosine + L-methionine + A + H(+). It participates in cofactor biosynthesis; molybdopterin biosynthesis. Its function is as follows. Catalyzes the cyclization of GTP to (8S)-3',8-cyclo-7,8-dihydroguanosine 5'-triphosphate. The polypeptide is GTP 3',8-cyclase (Acaryochloris marina (strain MBIC 11017)).